The primary structure comprises 428 residues: Probable dual-specificity RNA methyltransferase RlmN 2 (428 aa).

E142 serves as the catalytic Proton acceptor. The 267-residue stretch at 148 to 414 folds into the Radical SAM core domain; sequence FAGRATACVS…STVRQRRGID (267 aa). C155 and C419 form a disulfide bridge. C162, C166, and C169 together coordinate [4Fe-4S] cluster. Residues 207 to 228 are compositionally biased toward basic and acidic residues; that stretch reads MRDPSPGREAGEKSRDEADRHR. Residues 207 to 232 are disordered; it reads MRDPSPGREAGEKSRDEADRHRAPPT. S-adenosyl-L-methionine-binding positions include 244-245, S276, 299-301, and N375; these read GE and SLH. C419 functions as the S-methylcysteine intermediate in the catalytic mechanism.

It belongs to the radical SAM superfamily. RlmN family. The cofactor is [4Fe-4S] cluster.

It localises to the cytoplasm. The enzyme catalyses adenosine(2503) in 23S rRNA + 2 reduced [2Fe-2S]-[ferredoxin] + 2 S-adenosyl-L-methionine = 2-methyladenosine(2503) in 23S rRNA + 5'-deoxyadenosine + L-methionine + 2 oxidized [2Fe-2S]-[ferredoxin] + S-adenosyl-L-homocysteine. It carries out the reaction adenosine(37) in tRNA + 2 reduced [2Fe-2S]-[ferredoxin] + 2 S-adenosyl-L-methionine = 2-methyladenosine(37) in tRNA + 5'-deoxyadenosine + L-methionine + 2 oxidized [2Fe-2S]-[ferredoxin] + S-adenosyl-L-homocysteine. In terms of biological role, specifically methylates position 2 of adenine 2503 in 23S rRNA and position 2 of adenine 37 in tRNAs. The sequence is that of Probable dual-specificity RNA methyltransferase RlmN 2 from Opitutus terrae (strain DSM 11246 / JCM 15787 / PB90-1).